Here is a 403-residue protein sequence, read N- to C-terminus: Glucose-signaling factor 2 (403 aa).

Over 1–177 (MEIYIRLNAD…QEVQANYSSL (177 aa)) the chain is Lumenal. N-linked (GlcNAc...) asparagine glycosylation is found at Asn89 and Asn173. The chain crosses the membrane as a helical; Signal-anchor for type II membrane protein span at residues 178 to 198 (VAQWLFFVMHIFKVGIITLFL). At 199–403 (KLGIANPISF…IKKNDLKKSN (205 aa)) the chain is on the cytoplasmic side. The stretch at 330-388 (ELENNLKKILEEYDGDIGKMNAEIRRFRRFGIYEPDEKLASLVKLRREIADEKEKASNN) forms a coiled coil.

The protein localises to the endoplasmic reticulum membrane. Functionally, may be involved in the secretion of hexose transporters from the endoplasmic reticulum. Involved in secretion of GAL2 and HXT1. In Saccharomyces cerevisiae (strain ATCC 204508 / S288c) (Baker's yeast), this protein is Glucose-signaling factor 2 (GSF2).